The primary structure comprises 865 residues: Anaphase-promoting complex subunit 2 (865 aa).

This sequence belongs to the cullin family. As to quaternary structure, the APC/C is composed of at least 10 subunits. Interacts with APC8, APC11, CDC27A and CDC27B. In terms of tissue distribution, highly expressed in immature flowers. Expressed in stems, leaves and flowers.

The protein localises to the nucleus. It participates in protein modification; protein ubiquitination. Its function is as follows. Component of the anaphase promoting complex/cyclosome (APC/C), a cell cycle-regulated E3 ubiquitin-protein ligase complex that controls progression through mitosis and the G1 phase of the cell cycle. The APC/C complex controls several key steps in the cell cycle by mediating ubiquitination and subsequent degradation of target proteins such as cyclins. The APC/C complex is required for the female gametophyte development and is involved in several aspect of development by controlling cell division and cell elongation. Involved in the control of endoreduplication. The polypeptide is Anaphase-promoting complex subunit 2 (APC2) (Arabidopsis thaliana (Mouse-ear cress)).